Here is a 386-residue protein sequence, read N- to C-terminus: Succinyl-diaminopimelate desuccinylase (386 aa).

Histidine 76 contacts Zn(2+). Aspartate 78 is an active-site residue. Aspartate 110 lines the Zn(2+) pocket. Glutamate 144 functions as the Proton acceptor in the catalytic mechanism. Zn(2+) is bound by residues glutamate 145, glutamate 173, and histidine 359.

The protein belongs to the peptidase M20A family. DapE subfamily. As to quaternary structure, homodimer. Requires Zn(2+) as cofactor. It depends on Co(2+) as a cofactor.

It catalyses the reaction N-succinyl-(2S,6S)-2,6-diaminopimelate + H2O = (2S,6S)-2,6-diaminopimelate + succinate. It functions in the pathway amino-acid biosynthesis; L-lysine biosynthesis via DAP pathway; LL-2,6-diaminopimelate from (S)-tetrahydrodipicolinate (succinylase route): step 3/3. In terms of biological role, catalyzes the hydrolysis of N-succinyl-L,L-diaminopimelic acid (SDAP), forming succinate and LL-2,6-diaminopimelate (DAP), an intermediate involved in the bacterial biosynthesis of lysine and meso-diaminopimelic acid, an essential component of bacterial cell walls. The chain is Succinyl-diaminopimelate desuccinylase from Chromohalobacter salexigens (strain ATCC BAA-138 / DSM 3043 / CIP 106854 / NCIMB 13768 / 1H11).